We begin with the raw amino-acid sequence, 159 residues long: Insulin-like peptide 7 (159 aa).

An N-terminal signal peptide occupies residues 1–31; that stretch reads MTRMIIQNSGSWTLCGAVLLFVLPLIPTPEA. 3 disulfides stabilise this stretch: C63–C136, C75–C150, and C135–C141. Residues 90–121 constitute a propeptide, connecting peptide; that stretch reads TGNDEAWIKKTTTEPDGSTWLHVNYANMFLRS.

This sequence belongs to the insulin family. In terms of assembly, heterodimer of a B chain and an A chain linked by two disulfide bonds. As to expression, broadly expressed at a low level throughout the embryo, except the yolk. Expressed at a moderate level in the embryonic midgut. Larval expression is restricted to ten cells of the ventral nerve cord - in four pairs of centrally located cells in the most posterior abdominal segments and in one pair of dorsally located cells in the A1 or A2 segments.

It is found in the secreted. Functionally, possible ligand of InR/insulin-like receptor. This chain is Insulin-like peptide 7, found in Drosophila melanogaster (Fruit fly).